The following is a 702-amino-acid chain: K(+)-insensitive pyrophosphate-energized proton pump (702 aa).

4 consecutive transmembrane segments (helical) span residues 3 to 23, 63 to 83, 130 to 150, and 162 to 182; these read GIYLFVVAAALAALGYGALTI, AVVFVILTALLGISVGFGFLI, MLVAGLALLSVAFYYILLVGI, and VALGFGASLISIFARLGGGIF. Lys184 is a substrate binding site. Asp187, Asp191, Asn214, and Asp217 together coordinate Mg(2+). A run of 6 helical transmembrane segments spans residues 234-254, 255-275, 294-314, 329-349, 379-399, and 407-427; these read AVTVVATMVLASIFFAGVPAM, TSMMAYPLAIGGVCILASILG, GFLVSAGASFVGIILATAIVP, GFDLFLCAVIGLLVTGLLIWV, GLAISMEATALPALIICAAII, and LFGIAITVTSMLALAGMVVAL. Asp435 is a binding site for Mg(2+). Helical transmembrane passes span 466-486, 517-537, 586-606, and 612-632; these read AVTKGYAIGSAGLGALVLFAA, YVVVGLFIGGLLPYLFGSMGM, IIPSLLPVLAPIVLYFVILGI, and AFSALGAMLLGVIVTGLFVAI. Ca(2+) contacts are provided by Asp642, Asp668, and Asp672. Residue Lys675 coordinates substrate.

Belongs to the H(+)-translocating pyrophosphatase (TC 3.A.10) family. K(+)-insensitive subfamily. In terms of assembly, homodimer. Requires Mg(2+) as cofactor.

It is found in the cell inner membrane. The enzyme catalyses diphosphate + H2O + H(+)(in) = 2 phosphate + 2 H(+)(out). In terms of biological role, proton pump that utilizes the energy of pyrophosphate hydrolysis as the driving force for proton movement across the membrane. Generates a proton motive force. The chain is K(+)-insensitive pyrophosphate-energized proton pump from Rhodospirillum rubrum (strain ATCC 11170 / ATH 1.1.1 / DSM 467 / LMG 4362 / NCIMB 8255 / S1).